A 411-amino-acid chain; its full sequence is MKMVLSQRQREELNQAIADYLGTNGYADSLEAFRKEADLSTEAEKKFGGLLEKKWTSVIRLQKKVMELEAKLTEAEKEVIEGAPTKNKRTPGEWIPRPPEKYSLTGHRASITRVIFHPIFGLMVSASEDATIKIWDFETGEYERTLKGHTDSVQDVAFDAQGKLLVSCSADLSIKLWDFQQSYECVKTMHGHDHNVSSVAFVPAGDYVLSASRDRTIKMWEVATGYCVKTYTGHREWVRMVRVHIEGSIFATCSNDHTIRVWLTNSKDCKVELRDHEHTVECIAWAPEAAASAINEAAGADNKKGHHQGPFLASGSRDKTIRIWDVSVGQCLLTLNGHDNWVRGLAFHPGGKYLVSASDDKTIRVWDLRNKRCMKTLYAHQHFCTSIDFHKAHPYVISGSVDQTVKVWECR.

Residues 9–41 (QREELNQAIADYLGTNGYADSLEAFRKEADLST) form the LisH domain. A coiled-coil region spans residues 56 to 83 (TSVIRLQKKVMELEAKLTEAEKEVIEGA). 7 WD repeats span residues 106 to 147 (GHRA…RTLK), 148 to 187 (GHTD…ECVK), 191 to 230 (GHDH…CVKT), 233 to 272 (GHRE…CKVE), 275 to 334 (DHEH…CLLT), 337 to 376 (GHDN…CMKT), and 379 to 411 (AHQH…WECR).

This sequence belongs to the WD repeat LIS1/nudF family.

It localises to the cytoplasm. The protein resides in the cytoskeleton. The protein localises to the microtubule organizing center. Its subcellular location is the centrosome. In terms of biological role, positively regulates the activity of the minus-end directed microtubule motor protein dynein. May enhance dynein-mediated microtubule sliding by targeting dynein to the microtubule plus end. Required for several dynein- and microtubule-dependent processes. In Drosophila grimshawi (Hawaiian fruit fly), this protein is Lissencephaly-1 homolog.